A 157-amino-acid chain; its full sequence is 6,7-dimethyl-8-ribityllumazine synthase (157 aa).

5-amino-6-(D-ribitylamino)uracil contacts are provided by residues F30, 64-66 (ALE), and 88-90 (CII). 93-94 (ET) provides a ligand contact to (2S)-2-hydroxy-3-oxobutyl phosphate. H96 acts as the Proton donor in catalysis. N121 is a 5-amino-6-(D-ribitylamino)uracil binding site. R135 lines the (2S)-2-hydroxy-3-oxobutyl phosphate pocket.

Belongs to the DMRL synthase family.

It catalyses the reaction (2S)-2-hydroxy-3-oxobutyl phosphate + 5-amino-6-(D-ribitylamino)uracil = 6,7-dimethyl-8-(1-D-ribityl)lumazine + phosphate + 2 H2O + H(+). The protein operates within cofactor biosynthesis; riboflavin biosynthesis; riboflavin from 2-hydroxy-3-oxobutyl phosphate and 5-amino-6-(D-ribitylamino)uracil: step 1/2. Its function is as follows. Catalyzes the formation of 6,7-dimethyl-8-ribityllumazine by condensation of 5-amino-6-(D-ribitylamino)uracil with 3,4-dihydroxy-2-butanone 4-phosphate. This is the penultimate step in the biosynthesis of riboflavin. This chain is 6,7-dimethyl-8-ribityllumazine synthase, found in Albidiferax ferrireducens (strain ATCC BAA-621 / DSM 15236 / T118) (Rhodoferax ferrireducens).